The sequence spans 181 residues: ATP synthase subunit delta (181 aa).

The protein belongs to the ATPase delta chain family. As to quaternary structure, F-type ATPases have 2 components, F(1) - the catalytic core - and F(0) - the membrane proton channel. F(1) has five subunits: alpha(3), beta(3), gamma(1), delta(1), epsilon(1). F(0) has three main subunits: a(1), b(2) and c(10-14). The alpha and beta chains form an alternating ring which encloses part of the gamma chain. F(1) is attached to F(0) by a central stalk formed by the gamma and epsilon chains, while a peripheral stalk is formed by the delta and b chains.

Its subcellular location is the cell membrane. In terms of biological role, f(1)F(0) ATP synthase produces ATP from ADP in the presence of a proton or sodium gradient. F-type ATPases consist of two structural domains, F(1) containing the extramembraneous catalytic core and F(0) containing the membrane proton channel, linked together by a central stalk and a peripheral stalk. During catalysis, ATP synthesis in the catalytic domain of F(1) is coupled via a rotary mechanism of the central stalk subunits to proton translocation. Functionally, this protein is part of the stalk that links CF(0) to CF(1). It either transmits conformational changes from CF(0) to CF(1) or is implicated in proton conduction. In Mycoplasma capricolum subsp. capricolum (strain California kid / ATCC 27343 / NCTC 10154), this protein is ATP synthase subunit delta.